Reading from the N-terminus, the 205-residue chain is Urease accessory protein UreE (205 aa).

A compositionally biased stretch (basic and acidic residues) spans 171 to 192 (HHGHSHSHDHDHDHDHDHDHQH). Positions 171-205 (HHGHSHSHDHDHDHDHDHDHQHGPCCSHGHHHGHR) are disordered.

This sequence belongs to the UreE family.

It is found in the cytoplasm. In terms of biological role, involved in urease metallocenter assembly. Binds nickel. Probably functions as a nickel donor during metallocenter assembly. The chain is Urease accessory protein UreE from Burkholderia pseudomallei (strain K96243).